A 229-amino-acid chain; its full sequence is Peptidase E (229 aa).

Catalysis depends on charge relay system residues S120, D135, and H157.

This sequence belongs to the peptidase S51 family.

The protein resides in the cytoplasm. The enzyme catalyses Dipeptidase E catalyzes the hydrolysis of dipeptides Asp-|-Xaa. It does not act on peptides with N-terminal Glu, Asn or Gln, nor does it cleave isoaspartyl peptides.. In terms of biological role, hydrolyzes dipeptides containing N-terminal aspartate residues. May play a role in allowing the cell to use peptide aspartate to spare carbon otherwise required for the synthesis of the aspartate family of amino acids. The protein is Peptidase E of Salmonella arizonae (strain ATCC BAA-731 / CDC346-86 / RSK2980).